Consider the following 402-residue polypeptide: B3 domain-containing protein LFL1 (402 aa).

The segment at 1–174 (MRGEERWQEQ…AAPRPSSHHT (174 aa)) is disordered. Over residues 74 to 87 (ARPPTLAASAAAAS) the composition is skewed to low complexity. The span at 88 to 102 (SPPPPPPPPIPPLPP) shows a compositional bias: pro residues. Composition is skewed to low complexity over residues 103–139 (STST…AAVS) and 156–169 (PRPA…APRP). The segment at residues 181 to 284 (LQKELRYSDV…RFVIGAKKAG (104 aa)) is a DNA-binding region (TF-B3). Residues 381–402 (LHVTDDKSGHSLIPNPKSGPHM) form a disordered region.

As to expression, expressed in anthers, pollen grains and young developing embryos.

Its subcellular location is the nucleus. Transcription repressor involved in flowering time regulation. Represses the flowering activator EHD1 by binding specifically to the DNA sequence 5'-CATGCATG-3 of its promoter. The chain is B3 domain-containing protein LFL1 (LFL1) from Oryza sativa subsp. japonica (Rice).